We begin with the raw amino-acid sequence, 454 residues long: GA-binding protein alpha chain (454 aa).

Positions 168-251 (AALEGYRKEQ…SHLELLRKYV (84 aa)) constitute a PNT domain. The disordered stretch occupies residues 297–316 (QRAPRISGEDRSSPGNRTGN). The residue at position 303 (serine 303) is a Phosphoserine. Residues 320–400 (IQLWQFLLEL…QGKRFVYKFV (81 aa)) constitute a DNA-binding region (ETS).

It belongs to the ETS family. Heterotetramer of two alpha and two beta subunits.

The protein localises to the nucleus. Transcription factor capable of interacting with purine rich repeats (GA repeats). Positively regulates transcription of transcriptional repressor RHIT/ZNF205. Functionally, (Microbial infection) Necessary for the expression of the Adenovirus E4 gene. This Homo sapiens (Human) protein is GA-binding protein alpha chain (GABPA).